We begin with the raw amino-acid sequence, 106 residues long: MAGSALAVRARFGVWGMKVLQTRGFVSDSSDSMDTGAGSIREAGGAFGKREKAEEDRYFREKTKEQLAALRKHHEDEIDHHSKEIERLQKQIERHKKKIQQLKNNH.

Residues 1 to 25 (MAGSALAVRARFGVWGMKVLQTRGF) constitute a mitochondrion transit peptide. The N-terminal inhibitory region stretch occupies residues 26–52 (VSDSSDSMDTGAGSIREAGGAFGKREK). Residues 26–58 (VSDSSDSMDTGAGSIREAGGAFGKREKAEEDRY) are disordered. Residue serine 39 is modified to Phosphoserine. The span at 48–58 (GKREKAEEDRY) shows a compositional bias: basic and acidic residues. The stretch at 60–106 (REKTKEQLAALRKHHEDEIDHHSKEIERLQKQIERHKKKIQQLKNNH) forms a coiled coil. Positions 74-106 (HEDEIDHHSKEIERLQKQIERHKKKIQQLKNNH) are antiparallel alpha-helical coiled coil region. Lysine 103 is modified (N6-succinyllysine).

The protein belongs to the ATPase inhibitor family. As to quaternary structure, homodimer; represents the active form and is present at a pH value below 6.5. Homotetramer; represents the inactive form and is present at a pH value above 7.0.

The protein resides in the mitochondrion. Functionally, endogenous F(1)F(o)-ATPase inhibitor limiting ATP depletion when the mitochondrial membrane potential falls below a threshold and the F(1)F(o)-ATP synthase starts hydrolyzing ATP to pump protons out of the mitochondrial matrix. Required to avoid the consumption of cellular ATP when the F(1)F(o)-ATP synthase enzyme acts as an ATP hydrolase. Indirectly acts as a regulator of heme synthesis in erythroid tissues: regulates heme synthesis by modulating the mitochondrial pH and redox potential, allowing FECH to efficiently catalyze the incorporation of iron into protoporphyrin IX to produce heme. The polypeptide is ATPase inhibitor, mitochondrial (Mus musculus (Mouse)).